Consider the following 141-residue polypeptide: Sec-independent protein translocase protein TatB (141 aa).

The helical transmembrane segment at 2–22 threads the bilayer; it reads FANVGWGEMLVLVIAGLVILG. Positions 92–141 are disordered; the sequence is IFTGRFDSTSSDQPGSGKPPKPQSGPGPAAASGPAATTTPASTPFDPDAT. Over residues 117 to 141 the composition is skewed to low complexity; it reads PGPAAASGPAATTTPASTPFDPDAT.

Belongs to the TatB family. As to quaternary structure, the Tat system comprises two distinct complexes: a TatABC complex, containing multiple copies of TatA, TatB and TatC subunits, and a separate TatA complex, containing only TatA subunits. Substrates initially bind to the TatABC complex, which probably triggers association of the separate TatA complex to form the active translocon.

The protein localises to the cell membrane. In terms of biological role, part of the twin-arginine translocation (Tat) system that transports large folded proteins containing a characteristic twin-arginine motif in their signal peptide across membranes. Together with TatC, TatB is part of a receptor directly interacting with Tat signal peptides. TatB may form an oligomeric binding site that transiently accommodates folded Tat precursor proteins before their translocation. In Mycolicibacterium gilvum (strain PYR-GCK) (Mycobacterium gilvum (strain PYR-GCK)), this protein is Sec-independent protein translocase protein TatB.